The primary structure comprises 1123 residues: Nicotinic receptor-associated protein 4 (1123 aa).

Positions 1 to 18 (MGSLPLILLSLLLPGALA) are cleaved as a signal peptide. Residues 19-1071 (NVYSCAGSVK…TSSKRANDVD (1053 aa)) lie on the Lumenal side of the membrane. The helical transmembrane segment at 1072 to 1092 (ISVGTFLSLPFFVTLALVFFN) threads the bilayer. Residues 1093-1123 (QNRVLELLGTFIDWARNTFAPTADNHHRKRK) are Cytoplasmic-facing.

May interact with nra-2 in the ER. As to expression, expressed in body wall, pharyngeal, uterine and vulval muscles, motor neurons, nerve ring, motor and ventral cord neurons, hypodermal cells in the tail, vulval epithelium and intestine.

It localises to the endoplasmic reticulum membrane. Its function is as follows. Involved in the recognition and selection of protein complexes to exit the endoplasmic reticulum (ER). In muscles, regulates levamisole-sensitive nicotinic acetylcholine receptor (L-AChR) subunit composition, possibly by allowing only specific L-AChR subunit combinations to exit the ER. Specifically, may promote the inclusion of alpha subunit unc-38 into and the exclusion of unc-29 from L-AChR. Regulates L-AChR sensitivity to agonists such as nicotine and levamisole at neuro-muscular junctions. In Caenorhabditis elegans, this protein is Nicotinic receptor-associated protein 4.